The following is a 372-amino-acid chain: 3-galactosyl-N-acetylglucosaminide 4-alpha-L-fucosyltransferase FUT3 (372 aa).

Over 1-15 (MDPLGAAKTQWPWRR) the chain is Cytoplasmic. The helical; Signal-anchor for type II membrane protein transmembrane segment at 16 to 34 (CLAALLFQLLVAVCFFSYL) threads the bilayer. At 35–372 (RVSRDDATGS…MVRSIAAWFT (338 aa)) the chain is on the lumenal side. The segment at 40 to 68 (DATGSPRPGLMAVEPVTGAPGGSSRQDTT) is disordered. N-linked (GlcNAc...) asparagine glycosylation is found at Asn-165 and Asn-196.

This sequence belongs to the glycosyltransferase 10 family. In terms of processing, glycosylated.

It is found in the golgi apparatus. The protein resides in the golgi stack membrane. It catalyses the reaction a beta-D-galactosyl-(1-&gt;3)-N-acetyl-beta-D-glucosaminyl derivative + GDP-beta-L-fucose = a beta-D-galactosyl-(1-&gt;3)-[alpha-L-fucosyl-(1-&gt;4)]-N-acetyl-beta-D-glucosaminyl derivative + GDP + H(+). The catalysed reaction is an N-acetyl-alpha-neuraminyl-(2-&gt;3)-beta-D-galactosyl-(1-&gt;4)-N-acetyl-beta-D-glucosaminyl derivative + GDP-beta-L-fucose = an alpha-Neu5Ac-(2-&gt;3)-beta-D-Gal-(1-&gt;4)-[alpha-L-Fuc-(1-&gt;3)]-beta-D-GlcNAc derivative + GDP + H(+). The enzyme catalyses a beta-D-galactosyl-(1-&gt;4)-N-acetyl-beta-D-glucosaminyl derivative + GDP-beta-L-fucose = a beta-D-galactosyl-(1-&gt;4)-[alpha-L-fucosyl-(1-&gt;3)]-N-acetyl-beta-D-glucosaminyl derivative + GDP + H(+). It carries out the reaction an alpha-Neu5Ac-(2-&gt;3)-beta-D-Gal-(1-&gt;4)-beta-D-GlcNAc-(1-&gt;3)-beta-D-Gal-(1-&gt;4)-[alpha-L-Fuc-(1-&gt;3)]-beta-D-GlcNAc derivative + GDP-beta-L-fucose = an alpha-Neu5Ac-(2-&gt;3)-beta-D-Gal-(1-&gt;4)-[alpha-L-Fuc-(1-&gt;3)]-beta-D-GlcNAc-(1-&gt;3)-beta-D-Gal-(1-&gt;4)-[alpha-L-Fuc-(1-&gt;3)]-beta-D-GlcNAc derivative + GDP + H(+). It catalyses the reaction Lc4Cer + GDP-beta-L-fucose = a lactoside III(4)-a-Fuc-Lc4Cer + GDP + H(+). The catalysed reaction is a beta-D-Gal-(1-&gt;3)-beta-D-GlcNAc-(1-&gt;3)-beta-D-Gal-(1-&gt;4)-beta-D-Glc-(1&lt;-&gt;1')-Cer(d18:1(4E)) + GDP-beta-L-fucose = a III(4)-a-Fuc-Lc4Cer(d18:1(4E)) + GDP + H(+). The enzyme catalyses N-acetyl-alpha-neuraminosyl-(2-&gt;3)-beta-D-galactosyl-(1-&gt;3)-[N-acetyl-alpha-neuraminosyl-(2-&gt;6)]-N-acetyl-beta-D-glucosaminyl-(1-&gt;3)-beta-D-galactosyl-(1-&gt;4)-beta-D-glucosyl-(1&lt;-&gt;1')-N-acyl-sphing-4-enine + GDP-beta-L-fucose = N-acetyl-alpha-neuraminosyl-(2-&gt;3)-beta-D-galactosyl-(1-&gt;3)-alpha-L-fucosyl-(1-&gt;4)-[N-acetyl-alpha-neuraminosyl-(2-&gt;6)-N-acetyl-beta-D-glucosaminyl-(1-&gt;3)]-beta-D-galactosyl-(1-&gt;4)-beta-D-glucosyl-(1&lt;-&gt;1')-N-acyl-sphing-4-enine + GDP + H(+). It carries out the reaction N-acetyl-alpha-neuraminosyl-(2-&gt;3)-beta-D-galactosyl-(1-&gt;3)-N-acetyl-beta-D-glucosaminyl-(1-&gt;3)-beta-D-galactosyl-(1-&gt;4)-beta-D-glucosyl-(1&lt;-&gt;1')-N-acyl-sphing-4-enine + GDP-beta-L-fucose = N-acetyl-alpha-neuraminosyl-(2-&gt;3)-beta-D-galactosyl-(1-&gt;3)-alpha-L-fucosyl-(1-&gt;4)-[N-acetyl-beta-D-glucosaminyl-(1-&gt;3)]-beta-D-galactosyl-(1-&gt;4)-beta-D-glucosyl-(1&lt;-&gt;1')-N-acyl-sphing-4-enine + GDP + H(+). It catalyses the reaction beta-D-galactosyl-(1-&gt;3)-N-acetyl-D-glucosamine + GDP-beta-L-fucose = beta-D-galactosyl-(1-&gt;3)-[alpha-L-fucosyl-(1-&gt;4)]-N-acetyl-D-glucosamine + GDP + H(+). The catalysed reaction is alpha-L-Fuc-(1-&gt;2)-beta-D-Gal-(1-&gt;3)-D-GlcNAc + GDP-beta-L-fucose = alpha-L-Fuc-(1-&gt;2)-beta-D-Gal-(1-&gt;3)-[alpha-L-Fuc-(1-&gt;4)]-D-GlcNAc + GDP + H(+). The enzyme catalyses alpha-L-Fuc-(1-&gt;2)-beta-D-Gal-(1-&gt;4)-D-GlcNAc + GDP-beta-L-fucose = alpha-L-Fuc-(1-&gt;2)-beta-D-Gal-(1-&gt;4)-[alpha-L-Fuc-(1-&gt;3)]-D-GlcNAc + GDP + H(+). It carries out the reaction beta-D-galactosyl-(1-&gt;4)-N-acetyl-D-glucosamine + GDP-beta-L-fucose = beta-D-galactosyl-(1-&gt;4)-[alpha-L-fucosyl-(1-&gt;3)]-N-acetyl-D-glucosamine + GDP + H(+). It catalyses the reaction lactose + GDP-beta-L-fucose = beta-D-galactosyl-(1-&gt;4)-[alpha-L-fucosyl-(1-&gt;3)]-D-glucose + GDP + H(+). The catalysed reaction is an alpha-Neu5Ac-(2-&gt;3)-beta-D-Gal-(1-&gt;3)-D-GlcNAc derivative + GDP-beta-L-fucose = an alpha-Neu5Ac-(2-&gt;3)-beta-D-Gal-(1-&gt;3)-[alpha-L-Fuc-(1-&gt;4)]-beta-D-GlcNAc derivative + GDP + H(+). It functions in the pathway protein modification; protein glycosylation. Functionally, catalyzes the transfer of L-fucose, from a guanosine diphosphate-beta-L-fucose, to both the subterminal N-acetyl glucosamine (GlcNAc) of type 1 chain (beta-D-Gal-(1-&gt;3)-beta-D-GlcNAc) glycolipids and oligosaccharides via an alpha(1,4) linkage, and the subterminal glucose (Glc) or GlcNAc of type 2 chain (beta-D-Gal-(1-&gt;4)-beta-D-GlcNAc) oligosaccharides via an alpha(1,3) linkage, independently of the presence of terminal alpha-L-fucosyl-(1,2) moieties on the terminal galactose of these acceptors and participates in the blood groups Lewis determination and expression of Lewis a (Le(a)), lewis b (Le(b)), Lewis x/SSEA-1 (Le(x)) and lewis y (Le(y)) antigens. Also catalyzes the transfer of L-fucose to subterminal GlcNAc of sialyl- and disialyl-lactotetraosylceramide to produce sialyl Lewis a (sLe(a)) and disialyl Lewis a via an alpha(1,4) linkage and therefore may regulate cell surface sialyl Lewis a expression and consequently regulates adhesive properties to E-selectin, cell proliferation and migration. Catalyzes the transfer of an L-fucose to 3'-sialyl-N-acetyllactosamine by an alpha(1,3) linkage, which allows the formation of sialyl-Lewis x structure and therefore may regulate the sialyl-Lewis x surface antigen expression and consequently adhesive properties to E-selectin. Prefers type 1 chain over type 2 acceptors. Type 1 tetrasaccharide is a better acceptor than type 1 disaccharide suggesting that a beta anomeric configuration of GlcNAc in the substrate is preferred. Lewis-positive (Le(+)) individuals have an active enzyme while Lewis-negative (Le(-)) individuals have an inactive enzyme. The chain is 3-galactosyl-N-acetylglucosaminide 4-alpha-L-fucosyltransferase FUT3 from Pongo pygmaeus (Bornean orangutan).